The chain runs to 860 residues: Nuclear cap-binding protein complex subunit 1 (860 aa).

Positions 36-271 (CKDMLPDIRT…SNVKNALAND (236 aa)) constitute an MIF4G domain.

The protein belongs to the NCBP1 family. As to quaternary structure, component of the nuclear cap-binding complex (CBC).

The protein resides in the nucleus. Component of the cap-binding complex (CBC) involved in the nuclear export of capped U snRNAs. The CBC complex is required for efficient pre-mRNA splicing through efficient commitment complex and spliceosome formation; and involved in rRNA processing at sites A0, A1 and A2. This chain is Nuclear cap-binding protein complex subunit 1 (CBC1), found in Eremothecium gossypii (strain ATCC 10895 / CBS 109.51 / FGSC 9923 / NRRL Y-1056) (Yeast).